The following is a 188-amino-acid chain: Ribosome-recycling factor (188 aa).

It belongs to the RRF family.

The protein resides in the cytoplasm. In terms of biological role, responsible for the release of ribosomes from messenger RNA at the termination of protein biosynthesis. May increase the efficiency of translation by recycling ribosomes from one round of translation to another. The sequence is that of Ribosome-recycling factor from Lawsonia intracellularis (strain PHE/MN1-00).